A 146-amino-acid chain; its full sequence is Large ribosomal subunit protein uL15 (146 aa).

The segment at 1–52 is disordered; that stretch reads MKLSNLSPKAGSKKRRRRVGRGIAAGQGASCGFGMRGQKSRSGTGTKAGFEG. The segment covering 11–20 has biased composition (basic residues); the sequence is GSKKRRRRVG. The span at 23–35 shows a compositional bias: gly residues; sequence IAAGQGASCGFGM.

It belongs to the universal ribosomal protein uL15 family. In terms of assembly, part of the 50S ribosomal subunit.

Binds to the 23S rRNA. This chain is Large ribosomal subunit protein uL15, found in Picosynechococcus sp. (strain ATCC 27264 / PCC 7002 / PR-6) (Agmenellum quadruplicatum).